The sequence spans 362 residues: Probable dual-specificity RNA methyltransferase RlmN (362 aa).

Catalysis depends on Glu-91, which acts as the Proton acceptor. A Radical SAM core domain is found at 97-329 (QHYGLSVCVT…KKNGVNCVVR (233 aa)). Cys-104 and Cys-340 are joined by a disulfide. [4Fe-4S] cluster-binding residues include Cys-111, Cys-115, and Cys-118. S-adenosyl-L-methionine-binding positions include 163–164 (GE), Ser-195, 218–220 (SLH), and Asn-296. Residue Cys-340 is the S-methylcysteine intermediate of the active site.

The protein belongs to the radical SAM superfamily. RlmN family. [4Fe-4S] cluster serves as cofactor.

The protein localises to the cytoplasm. It catalyses the reaction adenosine(2503) in 23S rRNA + 2 reduced [2Fe-2S]-[ferredoxin] + 2 S-adenosyl-L-methionine = 2-methyladenosine(2503) in 23S rRNA + 5'-deoxyadenosine + L-methionine + 2 oxidized [2Fe-2S]-[ferredoxin] + S-adenosyl-L-homocysteine. The enzyme catalyses adenosine(37) in tRNA + 2 reduced [2Fe-2S]-[ferredoxin] + 2 S-adenosyl-L-methionine = 2-methyladenosine(37) in tRNA + 5'-deoxyadenosine + L-methionine + 2 oxidized [2Fe-2S]-[ferredoxin] + S-adenosyl-L-homocysteine. Its function is as follows. Specifically methylates position 2 of adenine 2503 in 23S rRNA and position 2 of adenine 37 in tRNAs. The polypeptide is Probable dual-specificity RNA methyltransferase RlmN (Streptococcus sanguinis (strain SK36)).